The following is a 356-amino-acid chain: Alanine racemase (356 aa).

Lys35 (proton acceptor; specific for D-alanine) is an active-site residue. At Lys35 the chain carries N6-(pyridoxal phosphate)lysine. Residue Arg130 participates in substrate binding. Residue Tyr253 is the Proton acceptor; specific for L-alanine of the active site. Met301 serves as a coordination point for substrate.

The protein belongs to the alanine racemase family. It depends on pyridoxal 5'-phosphate as a cofactor.

It catalyses the reaction L-alanine = D-alanine. It participates in amino-acid biosynthesis; D-alanine biosynthesis; D-alanine from L-alanine: step 1/1. Catalyzes the interconversion of L-alanine and D-alanine. May also act on other amino acids. The polypeptide is Alanine racemase (alr) (Sodalis glossinidius (strain morsitans)).